Here is a 61-residue protein sequence, read N- to C-terminus: Small ribosomal subunit protein uS14 (61 aa).

Zn(2+) is bound by residues Cys24, Cys27, Cys40, and Cys43.

This sequence belongs to the universal ribosomal protein uS14 family. Zinc-binding uS14 subfamily. Part of the 30S ribosomal subunit. Contacts proteins S3 and S10. Requires Zn(2+) as cofactor.

Its function is as follows. Binds 16S rRNA, required for the assembly of 30S particles and may also be responsible for determining the conformation of the 16S rRNA at the A site. The protein is Small ribosomal subunit protein uS14 of Rhodococcus erythropolis (strain PR4 / NBRC 100887).